We begin with the raw amino-acid sequence, 604 residues long: Beta-alanine transporter (604 aa).

The Cytoplasmic segment spans residues 1 to 23; that stretch reads MDFDEVLREVGSFGLYQKVIICS. The helical transmembrane segment at 24–44 threads the bilayer; sequence VLLPAALPCAFHAYSQLFIAA. Over 45–151 the chain is Extracellular; that stretch reads TPQHFCRVPE…QEWNLVCDRS (107 aa). 2 N-linked (GlcNAc...) asparagine glycosylation sites follow: Asn68 and Asn88. The chain crosses the membrane as a helical span at residues 152–172; it reads FLVTLALVVFGVGGLLGNYVF. Over 173–182 the chain is Cytoplasmic; that stretch reads GYLVDLWGRR. The chain crosses the membrane as a helical span at residues 183-203; it reads PSFYAYLLLEIIACAASAFAW. The Extracellular segment spans residues 204-212; the sequence is NYYTWLGLR. A helical membrane pass occupies residues 213-233; the sequence is FVVGLTVPAILASPYVLAIEL. At 234 to 243 the chain is on the cytoplasmic side; it reads VGPERRVFCT. A helical membrane pass occupies residues 244–264; sequence IVSNIAYSLGLVVLAGVIYIV. Residues 265 to 268 are Extracellular-facing; the sequence is RDWR. Residues 269–289 form a helical membrane-spanning segment; it reads ELSLAVSMPLLMLFSCFFVLP. The Cytoplasmic portion of the chain corresponds to 290-362; it reads ESPRWLMAVG…FRGPNMRRKT (73 aa). The helical transmembrane segment at 363-383 threads the bilayer; that stretch reads LIITLIWFANTSVYVGLSYYA. At 384–390 the chain is on the extracellular side; that stretch reads PALGGDE. A helical transmembrane segment spans residues 391–411; sequence IWNFFLAGAVELPTYLLLWPG. The Cytoplasmic portion of the chain corresponds to 412 to 418; sequence LSYFGRR. The chain crosses the membrane as a helical span at residues 419–439; it reads WILFISMLVGGVACVATFLYP. Over 440-442 the chain is Extracellular; it reads DIT. A helical transmembrane segment spans residues 443 to 463; the sequence is LLLYCVGKMGISSSFVVLPLM. The Cytoplasmic segment spans residues 464–473; sequence ASELYPTVVR. Residues 474-494 traverse the membrane as a helical segment; sequence GLGMSFSSVISMVGPIVIPMI. The Extracellular portion of the chain corresponds to 495-501; sequence NHMGQQM. Residues 502-522 traverse the membrane as a helical segment; sequence LVLPLIVMGALLILGGFASLL. Over 523 to 604 the chain is Cytoplasmic; that stretch reads LPETRNRNLP…SICKNEMRTL (82 aa).

The protein belongs to the major facilitator (TC 2.A.1) superfamily. Organic cation transporter (TC 2.A.1.19) family. In terms of tissue distribution, expressed in the head and predominantly in the retinal pigment cells of the compound eye.

The protein resides in the cell membrane. Functionally, beta-alanine transporter required for the uptake of beta-alanine by the glia. Required for the recycling process of the neurotransmitter histamine in photoreceptor neurons of the compound eye and therefore for photoreceptor synaptic transmission. Following histamine release from photoreceptors and its uptake by glia, histamine is conjugated to beta-alanine by e/Ebony to form the inactive metabolite, carcinine. In Drosophila melanogaster (Fruit fly), this protein is Beta-alanine transporter.